The following is a 149-amino-acid chain: Small heat shock protein IbpB (149 aa).

The sHSP domain occupies 26-137; sequence SQEPIDFPPY…QPQRIAIGGG (112 aa).

This sequence belongs to the small heat shock protein (HSP20) family. In terms of assembly, homodimer. Forms homomultimers of about 100-150 subunits at optimal growth temperatures. Conformation changes to oligomers at high temperatures or high ionic concentrations. The decrease in size of the multimers is accompanied by an increase in chaperone activity.

The protein localises to the cytoplasm. Associates with aggregated proteins, together with IbpA, to stabilize and protect them from irreversible denaturation and extensive proteolysis during heat shock and oxidative stress. Aggregated proteins bound to the IbpAB complex are more efficiently refolded and reactivated by the ATP-dependent chaperone systems ClpB and DnaK/DnaJ/GrpE. Its activity is ATP-independent. This is Small heat shock protein IbpB from Pectobacterium carotovorum subsp. carotovorum (strain PC1).